A 216-amino-acid polypeptide reads, in one-letter code: Probable transaldolase (216 aa).

The active-site Schiff-base intermediate with substrate is Lys84.

The protein belongs to the transaldolase family. Type 3B subfamily.

It is found in the cytoplasm. The catalysed reaction is D-sedoheptulose 7-phosphate + D-glyceraldehyde 3-phosphate = D-erythrose 4-phosphate + beta-D-fructose 6-phosphate. Its pathway is carbohydrate degradation; pentose phosphate pathway; D-glyceraldehyde 3-phosphate and beta-D-fructose 6-phosphate from D-ribose 5-phosphate and D-xylulose 5-phosphate (non-oxidative stage): step 2/3. Transaldolase is important for the balance of metabolites in the pentose-phosphate pathway. The polypeptide is Probable transaldolase (Lysinibacillus sphaericus (strain C3-41)).